The sequence spans 571 residues: Septation ring formation regulator EzrA (571 aa).

Residues 1-3 (MYY) lie on the Extracellular side of the membrane. Residues 4–22 (MLIGFIIVVIAVIGAGYIL) form a helical membrane-spanning segment. The Cytoplasmic segment spans residues 23–571 (KRKHYQRINE…ESKVSVDDIE (549 aa)). Coiled coils occupy residues 248–298 (LAQM…DTLE), 326–374 (DALA…ASGE), 400–437 (KFAEELRSLRKDELEARDDAERMRRAIITLDRKMERER), and 478–529 (RIAE…ENHF).

The protein belongs to the EzrA family.

It localises to the cell membrane. In terms of biological role, negative regulator of FtsZ ring formation; modulates the frequency and position of FtsZ ring formation. Inhibits FtsZ ring formation at polar sites. Interacts either with FtsZ or with one of its binding partners to promote depolymerization. The protein is Septation ring formation regulator EzrA of Listeria monocytogenes serotype 4b (strain CLIP80459).